We begin with the raw amino-acid sequence, 312 residues long: Methionyl-tRNA formyltransferase (312 aa).

109 to 112 (SLLP) is a binding site for (6S)-5,6,7,8-tetrahydrofolate.

Belongs to the Fmt family.

The enzyme catalyses L-methionyl-tRNA(fMet) + (6R)-10-formyltetrahydrofolate = N-formyl-L-methionyl-tRNA(fMet) + (6S)-5,6,7,8-tetrahydrofolate + H(+). Its function is as follows. Attaches a formyl group to the free amino group of methionyl-tRNA(fMet). The formyl group appears to play a dual role in the initiator identity of N-formylmethionyl-tRNA by promoting its recognition by IF2 and preventing the misappropriation of this tRNA by the elongation apparatus. The polypeptide is Methionyl-tRNA formyltransferase (Nitrosospira multiformis (strain ATCC 25196 / NCIMB 11849 / C 71)).